The following is a 212-amino-acid chain: Putative aryl-alcohol dehydrogenase AAD6 (212 aa).

Residue Y76 is the Proton donor of the active site.

Belongs to the aldo/keto reductase family. Aldo/keto reductase 2 subfamily.

This is Putative aryl-alcohol dehydrogenase AAD6 from Saccharomyces cerevisiae (strain ATCC 204508 / S288c) (Baker's yeast).